The following is a 435-amino-acid chain: Cyclic 2,3-diphosphoglycerate synthetase (435 aa).

The protein belongs to the cyclic 2,3-diphosphoglycerate synthetase family.

It localises to the cytoplasm. The enzyme catalyses (2R)-2,3-bisphosphoglycerate + ATP + H(+) = cyclic (2R)-2,3-bisphosphoglycerate + ADP + phosphate. In terms of biological role, catalyzes the formation of cyclic 2,3-diphosphoglycerate (cDPG) by formation of an intramolecular phosphoanhydride bond at the expense of ATP. This is Cyclic 2,3-diphosphoglycerate synthetase from Pyrococcus horikoshii (strain ATCC 700860 / DSM 12428 / JCM 9974 / NBRC 100139 / OT-3).